We begin with the raw amino-acid sequence, 544 residues long: Phenylalanine--tRNA ligase beta subunit (544 aa).

The B5 domain occupies 268–343; the sequence is LIHKIQNVRE…MSIGYNNLEP (76 aa). Mg(2+) contacts are provided by D321, D327, E330, and D331.

Belongs to the phenylalanyl-tRNA synthetase beta subunit family. Type 2 subfamily. Tetramer of two alpha and two beta subunits. The cofactor is Mg(2+).

The protein resides in the cytoplasm. It catalyses the reaction tRNA(Phe) + L-phenylalanine + ATP = L-phenylalanyl-tRNA(Phe) + AMP + diphosphate + H(+). The protein is Phenylalanine--tRNA ligase beta subunit of Saccharolobus solfataricus (strain ATCC 35092 / DSM 1617 / JCM 11322 / P2) (Sulfolobus solfataricus).